We begin with the raw amino-acid sequence, 141 residues long: Small ribosomal subunit protein uS12 (141 aa).

It belongs to the universal ribosomal protein uS12 family. Part of the 30S ribosomal subunit.

In terms of biological role, with S4 and S5 plays an important role in translational accuracy. Located at the interface of the 30S and 50S subunits. This Methanothermobacter thermautotrophicus (strain ATCC 29096 / DSM 1053 / JCM 10044 / NBRC 100330 / Delta H) (Methanobacterium thermoautotrophicum) protein is Small ribosomal subunit protein uS12.